Consider the following 878-residue polypeptide: Splicing factor 3B subunit 2 (878 aa).

Residues 1–10 show a composition bias toward basic and acidic residues; that stretch reads MAAEHPEPPK. 2 disordered regions span residues 1-25 and 67-136; these read MAAE…GHYG and RPVL…LRVG. A Glycyl lysine isopeptide (Lys-Gly) (interchain with G-Cter in SUMO2) cross-link involves residue Lys10. Residues 24-58 form the SAP domain; it reads YGAWAAQELQARLAEIGAPIQGSREELVERLQTYT. Pro residues-rich tracts occupy residues 91–114 and 122–133; these read PMPP…PPPG and AHPPNLGPPPPL. Residues 140–177 adopt a coiled-coil conformation; the sequence is ALSEEERLKLAQQQAALLMQQEERAKQAAVLMEQERQQ. 2 disordered regions span residues 183–356 and 383–436; these read GTAV…EYVT and KKEK…SKKK. A compositionally biased stretch (low complexity) spans 201-221; it reads PLGPRVAAPVGPVVPTPTVLP. Omega-N-methylarginine is present on residues Arg205, Arg228, and Arg230. The segment covering 224–237 has biased composition (pro residues); it reads APVPRPRGPPPPPG. Lys258 carries the N6-acetyllysine modification. The span at 260-269 shows a compositional bias: basic and acidic residues; sequence LQLKESRQEE. Residue Lys263 forms a Glycyl lysine isopeptide (Lys-Gly) (interchain with G-Cter in SUMO2) linkage. Ser272 is modified (phosphoserine). Thr281 is subject to Phosphothreonine. Phosphoserine occurs at positions 290 and 292. The residue at position 294 (Thr294) is a Phosphothreonine. A Phosphoserine modification is found at Ser300. Residues 305-321 show a composition bias toward basic residues; that stretch reads EKNRKRRNRKKKKKPQR. A compositionally biased stretch (basic and acidic residues) spans 330–342; the sequence is SGDREKDSGRSRG. Ser343 bears the Phosphoserine mark. Glycyl lysine isopeptide (Lys-Gly) (interchain with G-Cter in SUMO2) cross-links involve residues Lys383 and Lys395. 2 stretches are compositionally biased toward basic and acidic residues: residues 383 to 397 and 405 to 414; these read KKEK…DKME and KGFEEEHKDS. Positions 384–533 are required for interaction with PRMT9; that stretch reads KEKEKEPEKL…QEKEEQKTMK (150 aa). Phosphoserine is present on residues Ser414, Ser418, and Ser419. A Glycyl lysine isopeptide (Lys-Gly) (interchain with G-Cter in SUMO2) cross-link involves residue Lys475. Residues Arg491 and Arg498 each carry the omega-N-methylarginine modification. Arg491 is modified (symmetric dimethylarginine). Lys526 is covalently cross-linked (Glycyl lysine isopeptide (Lys-Gly) (interchain with G-Cter in SUMO2)). A disordered region spans residues 674 to 740; the sequence is AAEFQTKTEE…PGGFSSVPAG (67 aa). Residues 695-715 show a composition bias toward acidic residues; the sequence is EPSDEESSEEEEEEESDEDKP. Lys753 is covalently cross-linked (Glycyl lysine isopeptide (Lys-Gly) (interchain with G-Cter in SUMO2)). Thr763 carries the post-translational modification Phosphothreonine. Residues Lys773, Lys826, and Lys840 each participate in a glycyl lysine isopeptide (Lys-Gly) (interchain with G-Cter in SUMO2) cross-link. Residues 827–852 are compositionally biased toward basic and acidic residues; it reads YEEHVREQQAQVEKEDFSDMVAEHAA. The disordered stretch occupies residues 827 to 878; the sequence is YEEHVREQQAQVEKEDFSDMVAEHAAKQKQKKRKAQPQDSRGGSKKYKEFKF. At Ser844 the chain carries Phosphoserine.

As to quaternary structure, component of the 17S U2 SnRNP complex, a ribonucleoprotein complex that contains small nuclear RNA (snRNA) U2 and a number of specific proteins. Part of the SF3B subcomplex of the 17S U2 SnRNP complex. SF3B associates with the splicing subcomplex SF3A and a 12S RNA unit to form the U2 small nuclear ribonucleoproteins complex (U2 snRNP). Within the SF3B complex, interacts directly with SF3B4. Found in a complex with PRMT9, SF3B2 and SF3B4. Interacts (Arg-491-methylated form) with SMN1 (via Tudor domain). Interacts with RBM7. Interacts with ERCC6. Component of the minor spliceosome. Within this complex, interacts with SCNM1 and CRIPT. Post-translationally, methylation at Arg-491 by PRMT9 is required for the interaction with SMN1.

Its subcellular location is the nucleus. The protein localises to the nucleus speckle. In terms of biological role, component of the 17S U2 SnRNP complex of the spliceosome, a large ribonucleoprotein complex that removes introns from transcribed pre-mRNAs. The 17S U2 SnRNP complex (1) directly participates in early spliceosome assembly and (2) mediates recognition of the intron branch site during pre-mRNA splicing by promoting the selection of the pre-mRNA branch-site adenosine, the nucleophile for the first step of splicing. Within the 17S U2 SnRNP complex, SF3B2 is part of the SF3B subcomplex, which is required for 'A' complex assembly formed by the stable binding of U2 snRNP to the branchpoint sequence in pre-mRNA. Sequence independent binding of SF3A and SF3B subcomplexes upstream of the branch site is essential, it may anchor U2 snRNP to the pre-mRNA. May also be involved in the assembly of the 'E' complex. Also acts as a component of the minor spliceosome, which is involved in the splicing of U12-type introns in pre-mRNAs. This Mus musculus (Mouse) protein is Splicing factor 3B subunit 2.